We begin with the raw amino-acid sequence, 331 residues long: Tetraacyldisaccharide 4'-kinase (331 aa).

60-67 (TVGGTGKT) is an ATP binding site.

The protein belongs to the LpxK family.

The enzyme catalyses a lipid A disaccharide + ATP = a lipid IVA + ADP + H(+). It participates in glycolipid biosynthesis; lipid IV(A) biosynthesis; lipid IV(A) from (3R)-3-hydroxytetradecanoyl-[acyl-carrier-protein] and UDP-N-acetyl-alpha-D-glucosamine: step 6/6. Its function is as follows. Transfers the gamma-phosphate of ATP to the 4'-position of a tetraacyldisaccharide 1-phosphate intermediate (termed DS-1-P) to form tetraacyldisaccharide 1,4'-bis-phosphate (lipid IVA). The sequence is that of Tetraacyldisaccharide 4'-kinase from Pseudomonas syringae pv. syringae (strain B728a).